The following is a 242-amino-acid chain: Protein HTATIP2 (242 aa).

A2 is subject to N-acetylalanine. The tract at residues 2–25 (AETEALSKLREDFRMQNKSVFILG) is required for interaction with elongation factor EEF1A1. NADPH is bound by residues S27, G28, E29, T30, R52, R53, L92, G93, Y143, K147, L170, and R178. The active-site Proton acceptor is the Y143. The active site involves K147.

Monomer. Forms homodimers during oxidative stress. Interacts (via N-terminus) with elongation factor EEF1A1 (via middle-region); the interaction is direct and competes with EEF1A1 binding to guanyl-nucleotide exchange factor EEF1B2, thereby inhibiting GDP for GTP exchange and reactivation of EEF1A1. Interacts with nuclear transport receptors XPO4, IPO5/RANBP5, IPO7, IPO9 and KPNB1 as well as GCN1L1/GCN1 and LRPPRC probably through their HEAT repeats. Binds NCOA5/CIA. In terms of assembly, interacts (via N-terminus) with proteasome subunit PSMD4/s5a. As to quaternary structure, (Microbial infection) Interacts with HIV-1 Tat (via activation domain). In terms of tissue distribution, high levels in liver, lung, skeletal muscle, pancreas and placenta. Moderate levels in heart and kidney. Low levels in brain. Not expressed or low levels in variant small cell lung carcinomas, 33% of hepatocellular carcinomas and neuroblastomas. Levels are reduced in the heart of patients with hypertrophic cardiomyopathy and failing hearts.

The protein localises to the cytoplasm. In terms of biological role, represses translation by preventing reactivation of elongation factor eEF1A. May also inhibit nuclear import by competing with nuclear import substrates for binding to a subset of nuclear transport receptors. Has additionally been proposed to act as a redox sensor involved in cellular oxidative stress surveillance. This is Protein HTATIP2 from Homo sapiens (Human).